The chain runs to 373 residues: AA9 family lytic polysaccharide monooxygenase A (373 aa).

Positions 1 to 20 are cleaved as a signal peptide; that stretch reads MKSSTFGMLALAAAAKLVSA. His-21 lines the Cu(2+) pocket. Positions 36-55 are disordered; the sequence is EGNSQSGYIRSPPSNSPITD. Cys-63 and Cys-183 form a disulfide bridge. Residue His-102 coordinates Cu(2+). His-169 and Gln-178 together coordinate O2. Residue Tyr-180 coordinates Cu(2+). Residues 234-333 form a disordered region; the sequence is GASGSSSSSS…NSVPQPSSNA (100 aa). Low complexity-rich tracts occupy residues 235-262 and 270-323; these read ASGS…APSS and PATS…AAPT. A compositionally biased stretch (polar residues) spans 324–333; the sequence is NSVPQPSSNA. The 37-residue stretch at 335 to 371 folds into the CBM1 domain; the sequence is GAVKEWYQCGGLNYSGSTQCEEGLTCKKWNPYYHQCV. A glycan (N-linked (GlcNAc...) asparagine) is linked at Asn-347.

It belongs to the polysaccharide monooxygenase AA9 family. Cu(2+) is required as a cofactor.

The protein resides in the secreted. It carries out the reaction [(1-&gt;4)-beta-D-glucosyl]n+m + reduced acceptor + O2 = 4-dehydro-beta-D-glucosyl-[(1-&gt;4)-beta-D-glucosyl]n-1 + [(1-&gt;4)-beta-D-glucosyl]m + acceptor + H2O.. Functionally, lytic polysaccharide monooxygenase (LPMO) that depolymerizes crystalline and amorphous polysaccharides via the oxidation of scissile alpha- or beta-(1-4)-glycosidic bonds, yielding exclusively C4 oxidation products. Catalysis by LPMOs requires the reduction of the active-site copper from Cu(II) to Cu(I) by a reducing agent and H(2)O(2) or O(2) as a cosubstrate. In addition to cellulose, also cleaves the beta-(1!4)-glucan backbone of tamarind xyloglucan, but only next to unsubstituted glucosyl units. This chain is AA9 family lytic polysaccharide monooxygenase A, found in Aspergillus tamarii.